The following is a 129-amino-acid chain: Glycine cleavage system H protein (129 aa).

Positions 24-106 constitute a Lipoyl-binding domain; the sequence is SYTVGITEHA…FGDGWFFRVM (83 aa). Lys65 is subject to N6-lipoyllysine.

The protein belongs to the GcvH family. The glycine cleavage system is composed of four proteins: P, T, L and H. (R)-lipoate serves as cofactor.

Its function is as follows. The glycine cleavage system catalyzes the degradation of glycine. The H protein shuttles the methylamine group of glycine from the P protein to the T protein. The protein is Glycine cleavage system H protein of Shewanella frigidimarina (strain NCIMB 400).